Consider the following 197-residue polypeptide: Isopentenyl-diphosphate Delta-isomerase (197 aa).

Residues histidine 41 and histidine 48 each contribute to the Mn(2+) site. The Nudix hydrolase domain occupies arginine 46 to alanine 183. The active site involves cysteine 83. Cysteine 83 lines the Mg(2+) pocket. Histidine 85 is a Mn(2+) binding site. A Mg(2+)-binding site is contributed by glutamate 103. Residues glutamate 130 and glutamate 132 each coordinate Mn(2+). Glutamate 132 is an active-site residue.

The protein belongs to the IPP isomerase type 1 family. Mg(2+) is required as a cofactor. It depends on Mn(2+) as a cofactor.

The protein resides in the cytoplasm. The enzyme catalyses isopentenyl diphosphate = dimethylallyl diphosphate. The protein operates within isoprenoid biosynthesis; dimethylallyl diphosphate biosynthesis; dimethylallyl diphosphate from isopentenyl diphosphate: step 1/1. Catalyzes the 1,3-allylic rearrangement of the homoallylic substrate isopentenyl (IPP) to its highly electrophilic allylic isomer, dimethylallyl diphosphate (DMAPP). The polypeptide is Isopentenyl-diphosphate Delta-isomerase (Streptomyces coelicolor (strain ATCC BAA-471 / A3(2) / M145)).